A 193-amino-acid chain; its full sequence is Putative anthranilate synthase component II (193 aa).

One can recognise a Glutamine amidotransferase type-1 domain in the interval 2 to 193 (KLLIINNHDS…WLAIPPTTNP (192 aa)). Catalysis depends on residues cysteine 78, histidine 168, and glutamate 170.

In terms of assembly, tetramer of two components I and two components II.

The enzyme catalyses chorismate + L-glutamine = anthranilate + pyruvate + L-glutamate + H(+). The protein operates within amino-acid biosynthesis; L-tryptophan biosynthesis; L-tryptophan from chorismate: step 1/5. The protein is Putative anthranilate synthase component II of Haemophilus influenzae (strain ATCC 51907 / DSM 11121 / KW20 / Rd).